The sequence spans 238 residues: MSQLNVDPQEIAKFEALAAKWWDQHSEFRPLHQINPLRLNWIDEHAGGLAGKKVLDVGCGGGILAESMARRGADVLGIDMGEAPLNVARLHAEQEQVANIEYRQIPVEELAQEQAGQYDIVTCMEMMEHVPDPASIIKACQTLVKPGGHVFFSTINRNPKSYLFAIIGAEYVLRLLPKGTHDYHKFIRPSEMAHDIREAGLKLKDMTGLHYNPLTKHYWLAPNVDVNYMVHTLKEGQS.

The S-adenosyl-L-methionine site is built by R38, G58, D79, and M124.

It belongs to the methyltransferase superfamily. UbiG/COQ3 family.

The enzyme catalyses a 3-demethylubiquinol + S-adenosyl-L-methionine = a ubiquinol + S-adenosyl-L-homocysteine + H(+). The catalysed reaction is a 3-(all-trans-polyprenyl)benzene-1,2-diol + S-adenosyl-L-methionine = a 2-methoxy-6-(all-trans-polyprenyl)phenol + S-adenosyl-L-homocysteine + H(+). The protein operates within cofactor biosynthesis; ubiquinone biosynthesis. Its function is as follows. O-methyltransferase that catalyzes the 2 O-methylation steps in the ubiquinone biosynthetic pathway. This Acinetobacter baylyi (strain ATCC 33305 / BD413 / ADP1) protein is Ubiquinone biosynthesis O-methyltransferase.